A 592-amino-acid chain; its full sequence is Arginine--tRNA ligase (592 aa).

Positions 123–133 (PNTNKPLHLGH) match the 'HIGH' region motif.

It belongs to the class-I aminoacyl-tRNA synthetase family. Monomer.

It is found in the cytoplasm. The catalysed reaction is tRNA(Arg) + L-arginine + ATP = L-arginyl-tRNA(Arg) + AMP + diphosphate. In Flavobacterium johnsoniae (strain ATCC 17061 / DSM 2064 / JCM 8514 / BCRC 14874 / CCUG 350202 / NBRC 14942 / NCIMB 11054 / UW101) (Cytophaga johnsonae), this protein is Arginine--tRNA ligase.